A 561-amino-acid chain; its full sequence is Putative ABC transporter ATP-binding protein SAV_5847 (561 aa).

The region spanning 2–243 (IRFEDVSVTY…SPVYPPVVDL (242 aa)) is the ABC transporter 1 domain. 36-43 (GPSGVGKS) contributes to the ATP binding site. Residues 268-299 (ERLAATETPTPTATATATAAPAPSPSRPRRPR) are disordered. The segment covering 272-288 (ATETPTPTATATATAAP) has biased composition (low complexity). The ABC transporter 2 domain maps to 315–543 (AAVEALAVRR…SPSFAPQVTK (229 aa)). 347–354 (GRNGAGKS) is a binding site for ATP.

Belongs to the ABC transporter superfamily.

It localises to the cell membrane. Functionally, probably part of an ABC transporter complex. Responsible for energy coupling to the transport system. This is Putative ABC transporter ATP-binding protein SAV_5847 from Streptomyces avermitilis (strain ATCC 31267 / DSM 46492 / JCM 5070 / NBRC 14893 / NCIMB 12804 / NRRL 8165 / MA-4680).